Reading from the N-terminus, the 668-residue chain is MDNSIFYSLGNGIKFNKNKYKKEIGIFNGITSHELDKQTKTNNKVHFFKNTTPSTPVISKKDNIKQKKEEEEDNDNDNEESKEDDDFVEDDDNDDDDDDDDEDEENEEPKEKEFIKHQVNNDEEEEDITLFNKSNENENSDDSDDSDDSGKNKNKNKNKKVSKETQEDKHKREIATFRNKHRIKVDGTDIPDPMTEFSQLENRFKVRKYLLNNINEIGYKEPSPIQMQVIPILLKEREVVAIAPTGSGKTASFSIPILQALYEPKKEGFRSVIIAPTRELAQQIYRNFRLLSKGKPFRICVLSKNLHNQSTNENLIKNYDILITTPLRLVYLIKENLLSLNKVEYLVFDEADKLFDKNFQEQVDIVVTACQNPKLKICLFSATMNQQVEELGHSIMKNPIKIIIGEQNAAAITVDQKLIYVGKEEGKLLAVRQLIQKGLEPPILIFTQSKERAHDLFQELIFDGINVDVIHSERTQFQRDTIVKKFRMGKIWVLICTELMARGMDFKGVNFVINFDFPHTLASYIHRIGRTGRAGRPGVAYTLYTDADTPMLPTIVHAMKQSGSHVPDWMLNLKVQGKKKQQYRLKGVERESFSTIPLSERTSSKFKLRKNKKSFNLPGDQQKSNENNNNNNNNNNDNKKRKSFNNNGEKNNNPERKQKQIKKPKKII.

A disordered region spans residues 37 to 174; that stretch reads KQTKTNNKVH…TQEDKHKREI (138 aa). A compositionally biased stretch (polar residues) spans 40-57; that stretch reads KTNNKVHFFKNTTPSTPV. Positions 59-69 are enriched in basic and acidic residues; that stretch reads SKKDNIKQKKE. The span at 70-108 shows a compositional bias: acidic residues; the sequence is EEEDNDNDNEESKEDDDFVEDDDNDDDDDDDDEDEENEE. Residues 109-120 are compositionally biased toward basic and acidic residues; the sequence is PKEKEFIKHQVN. The segment covering 138–147 has biased composition (acidic residues); it reads ENSDDSDDSD. The segment covering 161-174 has biased composition (basic and acidic residues); sequence VSKETQEDKHKREI. The Q motif motif lies at 199–227; that stretch reads QLENRFKVRKYLLNNINEIGYKEPSPIQM. One can recognise a Helicase ATP-binding domain in the interval 230 to 402; the sequence is IPILLKEREV…HSIMKNPIKI (173 aa). Position 243 to 250 (243 to 250) interacts with ATP; it reads APTGSGKT. The short motif at 349–352 is the DEAD box element; sequence DEAD. The region spanning 413 to 574 is the Helicase C-terminal domain; it reads TVDQKLIYVG…HVPDWMLNLK (162 aa). Residues 601–668 form a disordered region; sequence RTSSKFKLRK…KQIKKPKKII (68 aa). Positions 604–613 are enriched in basic residues; it reads SKFKLRKNKK. Positions 624–636 are enriched in low complexity; it reads SNENNNNNNNNNN. The span at 659-668 shows a compositional bias: basic residues; the sequence is KQIKKPKKII.

The protein belongs to the DEAD box helicase family. DDX52/ROK1 subfamily.

The protein resides in the nucleus. It is found in the nucleolus. The enzyme catalyses ATP + H2O = ADP + phosphate + H(+). ATP-binding RNA helicase which may be involved in the ribosome biogenesis. In Dictyostelium discoideum (Social amoeba), this protein is Probable ATP-dependent RNA helicase ddx52 (ddx52).